Reading from the N-terminus, the 129-residue chain is Small ribosomal subunit protein uS11 (129 aa).

It belongs to the universal ribosomal protein uS11 family. In terms of assembly, part of the 30S ribosomal subunit. Interacts with proteins S7 and S18. Binds to IF-3.

Functionally, located on the platform of the 30S subunit, it bridges several disparate RNA helices of the 16S rRNA. Forms part of the Shine-Dalgarno cleft in the 70S ribosome. This chain is Small ribosomal subunit protein uS11, found in Methylobacterium sp. (strain 4-46).